The primary structure comprises 498 residues: ATP synthase subunit beta, chloroplastic (498 aa).

172-179 contributes to the ATP binding site; sequence GGAGVGKT.

The protein belongs to the ATPase alpha/beta chains family. F-type ATPases have 2 components, CF(1) - the catalytic core - and CF(0) - the membrane proton channel. CF(1) has five subunits: alpha(3), beta(3), gamma(1), delta(1), epsilon(1). CF(0) has four main subunits: a(1), b(1), b'(1) and c(9-12).

Its subcellular location is the plastid. It is found in the chloroplast thylakoid membrane. It carries out the reaction ATP + H2O + 4 H(+)(in) = ADP + phosphate + 5 H(+)(out). Its function is as follows. Produces ATP from ADP in the presence of a proton gradient across the membrane. The catalytic sites are hosted primarily by the beta subunits. This Aspidistra elatior (Cast-iron plant) protein is ATP synthase subunit beta, chloroplastic.